The primary structure comprises 208 residues: Uracil phosphoribosyltransferase (208 aa).

Residues Arg78, Arg103, and 130–138 contribute to the 5-phospho-alpha-D-ribose 1-diphosphate site; that span reads DPMLATGGS. Uracil is bound by residues Ile193 and 198 to 200; that span reads GDA. Asp199 contacts 5-phospho-alpha-D-ribose 1-diphosphate.

The protein belongs to the UPRTase family. It depends on Mg(2+) as a cofactor.

It carries out the reaction UMP + diphosphate = 5-phospho-alpha-D-ribose 1-diphosphate + uracil. The protein operates within pyrimidine metabolism; UMP biosynthesis via salvage pathway; UMP from uracil: step 1/1. Its activity is regulated as follows. Allosterically activated by GTP. Functionally, catalyzes the conversion of uracil and 5-phospho-alpha-D-ribose 1-diphosphate (PRPP) to UMP and diphosphate. This chain is Uracil phosphoribosyltransferase, found in Acholeplasma laidlawii (strain PG-8A).